The chain runs to 438 residues: UPF0229 protein NGR_c12350 (438 aa).

Over residues 1 to 16 (MPNFIDRRLNPKDKSL) the composition is skewed to basic and acidic residues. 2 disordered regions span residues 1–20 (MPNF…GNRQ) and 83–107 (FAAG…GTGQ). Residues 94–105 (SGGGATGAGAGT) show a composition bias toward gly residues.

It belongs to the UPF0229 family.

The protein is UPF0229 protein NGR_c12350 of Sinorhizobium fredii (strain NBRC 101917 / NGR234).